Reading from the N-terminus, the 255-residue chain is Type III pantothenate kinase (255 aa).

6-13 (DIGNTNIK) lines the ATP pocket. Residue 107–110 (GADR) participates in substrate binding. The active-site Proton acceptor is the aspartate 109. An ATP-binding site is contributed by threonine 132. Threonine 184 is a binding site for substrate.

The protein belongs to the type III pantothenate kinase family. In terms of assembly, homodimer. NH4(+) serves as cofactor. K(+) is required as a cofactor.

It is found in the cytoplasm. The enzyme catalyses (R)-pantothenate + ATP = (R)-4'-phosphopantothenate + ADP + H(+). Its pathway is cofactor biosynthesis; coenzyme A biosynthesis; CoA from (R)-pantothenate: step 1/5. Functionally, catalyzes the phosphorylation of pantothenate (Pan), the first step in CoA biosynthesis. This chain is Type III pantothenate kinase, found in Roseiflexus sp. (strain RS-1).